The following is a 60-amino-acid chain: uncharacterized protein (60 aa).

This is an uncharacterized protein from Archaeoglobus fulgidus (strain ATCC 49558 / DSM 4304 / JCM 9628 / NBRC 100126 / VC-16).